A 338-amino-acid chain; its full sequence is MSRQPILDIKGLRTVFRTRAREIVAVNDVDIVVNPGETVALVGESGSGKSVTSLSIMRLLARKVGFIDAGSIILRGKSGQTVDLAAIDEEAMRRIRGNDIGMVFQEPMTSLNPVYTIGDQIGEPLRVHRGTSRREALEAVVELLDRVGIPDARRRAGQYPHELSGGMRQRATIAMALICNPTLLIADEPTTALDVTIQAQILDLMQKLQSESGMGMLFVTHNLGVVAEIAQRVVVMYAGRIVESGPVKEVFRNPRHPYTMGLLRSMPRLGDATEMKRRGEKLNTIPGMVPGLANLPSGCAFAPRCSFAVEACHAAVPPLASVNEHHGSRCIRWQEIAA.

The ABC transporter domain maps to 10–263; it reads KGLRTVFRTR…PRHPYTMGLL (254 aa). ATP is bound at residue 43–50; sequence GESGSGKS.

It belongs to the ABC transporter superfamily. As to quaternary structure, the complex is composed of two ATP-binding proteins (BOV_A0347 and BOV_A0348), two transmembrane proteins (BOV_A0350 and BOV_A0351) and a solute-binding protein (BOV_A0352).

Its subcellular location is the cell inner membrane. Its function is as follows. Probably part of an ABC transporter complex that could be involved in peptide import. Probably responsible for energy coupling to the transport system. The sequence is that of Putative peptide import ATP-binding protein BOV_A0348 from Brucella ovis (strain ATCC 25840 / 63/290 / NCTC 10512).